Here is a 120-residue protein sequence, read N- to C-terminus: Large ribosomal subunit protein bL19 (120 aa).

The protein belongs to the bacterial ribosomal protein bL19 family.

This protein is located at the 30S-50S ribosomal subunit interface and may play a role in the structure and function of the aminoacyl-tRNA binding site. The chain is Large ribosomal subunit protein bL19 (rplS) from Nostoc sp. (strain PCC 7120 / SAG 25.82 / UTEX 2576).